The chain runs to 216 residues: N-(5'-phosphoribosyl)anthranilate isomerase (216 aa).

Belongs to the TrpF family.

It catalyses the reaction N-(5-phospho-beta-D-ribosyl)anthranilate = 1-(2-carboxyphenylamino)-1-deoxy-D-ribulose 5-phosphate. Its pathway is amino-acid biosynthesis; L-tryptophan biosynthesis; L-tryptophan from chorismate: step 3/5. The polypeptide is N-(5'-phosphoribosyl)anthranilate isomerase (Leptospira borgpetersenii serovar Hardjo-bovis (strain JB197)).